The sequence spans 306 residues: Glutaminase (306 aa).

The substrate site is built by Ser-64, Asn-115, Glu-159, Asn-166, Tyr-190, Tyr-242, and Val-260.

Belongs to the glutaminase family. As to quaternary structure, homotetramer.

The catalysed reaction is L-glutamine + H2O = L-glutamate + NH4(+). The sequence is that of Glutaminase from Vibrio atlanticus (strain LGP32) (Vibrio splendidus (strain Mel32)).